The chain runs to 1054 residues: CCAAT/enhancer-binding protein zeta (1054 aa).

The span at 1 to 20 (MAAVKEPLEFHAKRPWRPEE) shows a compositional bias: basic and acidic residues. Disordered stretches follow at residues 1-42 (MAAV…GFSL) and 102-160 (VEED…PKVK). Over residues 21 to 34 (AVEDPDEEDEDNTS) the composition is skewed to acidic residues. Residues 109–120 (EKENSSKKEVKI) are compositionally biased toward basic and acidic residues. The residue at position 113 (Ser-113) is a Phosphoserine. Over residues 124–138 (NNKNTAESQRTSVNK) the composition is skewed to polar residues. Ser-629 is subject to Phosphoserine. At Lys-695 the chain carries N6-acetyllysine. Phosphoserine is present on Ser-835. 2 disordered regions span residues 873–902 (RTKG…DEVS) and 915–969 (DEDG…KKRN). Acidic residues-rich tracts occupy residues 882–902 (LDED…DEVS) and 915–933 (DEDG…ESVP). Ser-959, Ser-973, and Ser-978 each carry phosphoserine. A disordered region spans residues 1031-1054 (IIKKKKHFKKKRIKTTQKTKKQRK).

Belongs to the CBF/MAK21 family.

It is found in the nucleus. In terms of biological role, stimulates transcription from the HSP70 promoter. In Homo sapiens (Human), this protein is CCAAT/enhancer-binding protein zeta (CEBPZ).